The primary structure comprises 61 residues: Large ribosomal subunit protein bL32 (61 aa).

The span at 1–16 shows a compositional bias: basic residues; sequence MAVPKRKTSPSKRGMR. The interval 1-40 is disordered; the sequence is MAVPKRKTSPSKRGMRRSADALKAPTYIEDKNSGELRRPH. Positions 28–40 are enriched in basic and acidic residues; sequence IEDKNSGELRRPH.

This sequence belongs to the bacterial ribosomal protein bL32 family.

The polypeptide is Large ribosomal subunit protein bL32 (Sinorhizobium medicae (strain WSM419) (Ensifer medicae)).